A 386-amino-acid polypeptide reads, in one-letter code: Threonine--tRNA ligase editing subunit (386 aa).

It belongs to the class-II aminoacyl-tRNA synthetase family. Archaea-specific ThrRS editing domain subfamily. As to quaternary structure, probably interacts with its catalytic subunit (AC Q97VW8); a subunit fusion (in the order edit-catalytic) is fully functional.

Its subcellular location is the cytoplasm. In terms of biological role, freestanding tRNA editing subunit of threonine--tRNA ligase, the catalytic subunit is AC Q97VW8. Deacylates (edits) mischarged L-seryl-tRNA(Thr) in trans, removing L-serine, has no aminoacylation activity. In vitro when both subunits are present, or if the 2 subunits are fused, L-seryl-tRNA(Thr) is no longer produced. Has no activity on correctly acylated L-seryl-tRNA(Ser) or L-threonyl-tRNA(Thr). Editing is probably catalyzed by the 2'-OH of A76 of tRNA(Thr). In Saccharolobus solfataricus (strain ATCC 35092 / DSM 1617 / JCM 11322 / P2) (Sulfolobus solfataricus), this protein is Threonine--tRNA ligase editing subunit.